The primary structure comprises 681 residues: DNA-directed RNA polymerase subunit beta' (681 aa).

Residues C69, C71, C87, and C90 each coordinate Zn(2+). Mg(2+) contacts are provided by D489, D491, and D493.

This sequence belongs to the RNA polymerase beta' chain family. RpoC1 subfamily. In terms of assembly, in plastids the minimal PEP RNA polymerase catalytic core is composed of four subunits: alpha, beta, beta', and beta''. When a (nuclear-encoded) sigma factor is associated with the core the holoenzyme is formed, which can initiate transcription. Requires Mg(2+) as cofactor. Zn(2+) is required as a cofactor.

The protein localises to the plastid. It is found in the chloroplast. The catalysed reaction is RNA(n) + a ribonucleoside 5'-triphosphate = RNA(n+1) + diphosphate. DNA-dependent RNA polymerase catalyzes the transcription of DNA into RNA using the four ribonucleoside triphosphates as substrates. In Cycas taitungensis (Prince sago), this protein is DNA-directed RNA polymerase subunit beta'.